We begin with the raw amino-acid sequence, 1495 residues long: ABC transporter C family member 12 (1495 aa).

Helical transmembrane passes span 38-58 (VMLVSHFVLLGLCFYRIWIIF), 76-96 (VLGLLACYCVVEPVLRLVMGI), 110-130 (FEVASLMVEAFAWFSMLVLIG), 146-166 (FGVLYVLVADAVLLDLVLPLK), 173-195 (ALYLFISSRCSQALFGILLLIYI), 303-323 (FWLAGIFKIGNDLSQFVGPVI), 337-357 (AWVGYVYAFIIFVGVTLGVLC), 420-440 (GLWSAPFRIIVSMILLYQQLG), 441-461 (VASLFGSLILFLLIPLQTLII), 528-548 (FILNSIPVVVTVVSFGVFVLL), and 558-578 (FTSLSLFAVLRFPLNMLPNLL). One can recognise an ABC transmembrane type-1 1 domain in the interval 303-583 (FWLAGIFKIG…LPNLLSQVVN (281 aa)). In terms of domain architecture, ABC transporter 1 spans 615 to 839 (ISIKNGYFSW…GILFKKLMEN (225 aa)). 650-657 (GGTGEGKT) contacts ATP. Helical transmembrane passes span 907-927 (AVGGLWVVMILLACYLATEVL), 949-969 (PGFYIVVYALLGFGQVAVTFT), 1042-1062 (FALIGTVSTISLWAIMPLLIL), 1140-1160 (LETLGGVMIWLTATFAVLQNG), and 1166-1186 (AGFASTMGLLLSYTLNITSLL). An ABC transmembrane type-1 2 domain is found at 914–1198 (VMILLACYLA…VLRQASRAEN (285 aa)). The ABC transporter 2 domain occupies 1235 to 1469 (IKFEDVHLRY…DTSAFFRMVH (235 aa)). 1269–1276 (GRTGAGKS) is a binding site for ATP.

The protein belongs to the ABC transporter superfamily. ABCC family. Conjugate transporter (TC 3.A.1.208) subfamily. As to expression, ubiquitous.

The protein localises to the membrane. It carries out the reaction ATP + H2O + xenobioticSide 1 = ADP + phosphate + xenobioticSide 2.. Its function is as follows. Pump for glutathione S-conjugates. The polypeptide is ABC transporter C family member 12 (ABCC12) (Arabidopsis thaliana (Mouse-ear cress)).